The following is a 436-amino-acid chain: GTPase Der (436 aa).

2 consecutive EngA-type G domains span residues 4-167 (PIVA…DEET) and 176-351 (IRLS…ENHK). GTP is bound by residues 10–17 (GRPNVGKS), 57–61 (DTGGI), 119–122 (NKVD), 182–189 (GRPNVGKS), 229–233 (DTAGM), and 294–297 (NKWD). In terms of domain architecture, KH-like spans 352-436 (KRVQSSTLNE…PIHIIPRRRN (85 aa)).

Belongs to the TRAFAC class TrmE-Era-EngA-EngB-Septin-like GTPase superfamily. EngA (Der) GTPase family. In terms of assembly, associates with the 50S ribosomal subunit.

Functionally, GTPase that plays an essential role in the late steps of ribosome biogenesis. This is GTPase Der from Staphylococcus haemolyticus (strain JCSC1435).